Consider the following 464-residue polypeptide: MSRIETDSLGPVEVPEDAYWGAQTQRSLINFAIGKERMPLAVLHALALIKKAAARVNDRNGDLPADIARLIEQAADEVLDGQHDDQFPLVVWQTGSGTQSNMNVNEVIAGRANELAGKGRGGKAPVHPNDHVNRSQSSNDCFPTAMHIAAAQAVHEKLLPAVTELSSGLAELSMRHHKLVKTGRTHMMDATPITFGQEVSAFVAQLDYAQRAIRATLPAVCELAQGGTAVGTGLNAPQGFAEAIAAELAALSGLPFITAPNKFAALAGHEPLTSLAGALKTLAVALMKIANDLRLLGSGPRAGLAEVRLPANEPGSSIMPGKVNPTQCEALSMLACQVLGNDAAIGFAASQGHLQLNVFKPVIIHNLLQSIELLADGCRNFQQHCVAGIEPDAEQMAAHLERGLMLVTALNPHIGYDKAAEIAKKAYSEGTTLREAALALKYLTNEQFDQWVRPENMLAPGGKG.

Substrate-binding positions include 96–98, 127–130, 137–139, and Thr185; these read SGT, HPND, and SSN. The active-site Proton donor/acceptor is the His186. Ser316 is a catalytic residue. Substrate contacts are provided by residues Ser317 and 322–324; that span reads KVN.

It belongs to the class-II fumarase/aspartase family. Fumarase subfamily. Homotetramer.

The protein localises to the cytoplasm. It catalyses the reaction (S)-malate = fumarate + H2O. Its pathway is carbohydrate metabolism; tricarboxylic acid cycle; (S)-malate from fumarate: step 1/1. Functionally, involved in the TCA cycle. Catalyzes the stereospecific interconversion of fumarate to L-malate. The chain is Fumarate hydratase class II from Pseudomonas putida (strain ATCC 47054 / DSM 6125 / CFBP 8728 / NCIMB 11950 / KT2440).